The sequence spans 492 residues: Ketol-acid reductoisomerase (NADP(+)) (492 aa).

Positions 15–208 constitute a KARI N-terminal Rossmann domain; it reads AQLGKCRFMA…GGHRAGVLES (194 aa). Residues 45–48, Arg-68, Arg-76, Ser-78, and 108–110 contribute to the NADP(+) site; these read CGAQ and DKQ. His-132 is a catalytic residue. Gly-158 contacts NADP(+). 2 consecutive KARI C-terminal knotted domains span residues 209–344 and 345–485; these read SFVA…TAAQ and FEGK…MTDM. Residues Asp-217, Glu-221, Glu-389, and Glu-393 each coordinate Mg(2+). Ser-414 serves as a coordination point for substrate.

This sequence belongs to the ketol-acid reductoisomerase family. It depends on Mg(2+) as a cofactor.

The catalysed reaction is (2R)-2,3-dihydroxy-3-methylbutanoate + NADP(+) = (2S)-2-acetolactate + NADPH + H(+). The enzyme catalyses (2R,3R)-2,3-dihydroxy-3-methylpentanoate + NADP(+) = (S)-2-ethyl-2-hydroxy-3-oxobutanoate + NADPH + H(+). It participates in amino-acid biosynthesis; L-isoleucine biosynthesis; L-isoleucine from 2-oxobutanoate: step 2/4. It functions in the pathway amino-acid biosynthesis; L-valine biosynthesis; L-valine from pyruvate: step 2/4. In terms of biological role, involved in the biosynthesis of branched-chain amino acids (BCAA). Catalyzes an alkyl-migration followed by a ketol-acid reduction of (S)-2-acetolactate (S2AL) to yield (R)-2,3-dihydroxy-isovalerate. In the isomerase reaction, S2AL is rearranged via a Mg-dependent methyl migration to produce 3-hydroxy-3-methyl-2-ketobutyrate (HMKB). In the reductase reaction, this 2-ketoacid undergoes a metal-dependent reduction by NADPH to yield (R)-2,3-dihydroxy-isovalerate. The polypeptide is Ketol-acid reductoisomerase (NADP(+)) (Erwinia tasmaniensis (strain DSM 17950 / CFBP 7177 / CIP 109463 / NCPPB 4357 / Et1/99)).